A 235-amino-acid chain; its full sequence is LexA repressor (235 aa).

The segment at residues 26–46 (FDEMKDALDLKSKSGIHRLIT) is a DNA-binding region (H-T-H motif). Active-site for autocatalytic cleavage activity residues include Ser-156 and Lys-194.

Belongs to the peptidase S24 family. In terms of assembly, homodimer.

It carries out the reaction Hydrolysis of Ala-|-Gly bond in repressor LexA.. Represses a number of genes involved in the response to DNA damage (SOS response), including recA and lexA. In the presence of single-stranded DNA, RecA interacts with LexA causing an autocatalytic cleavage which disrupts the DNA-binding part of LexA, leading to derepression of the SOS regulon and eventually DNA repair. In Paramagnetospirillum magneticum (strain ATCC 700264 / AMB-1) (Magnetospirillum magneticum), this protein is LexA repressor.